The sequence spans 67 residues: Large ribosomal subunit protein uL30 (67 aa).

This sequence belongs to the universal ribosomal protein uL30 family. In terms of assembly, part of the 50S ribosomal subunit.

In Thermotoga petrophila (strain ATCC BAA-488 / DSM 13995 / JCM 10881 / RKU-1), this protein is Large ribosomal subunit protein uL30.